The chain runs to 479 residues: Cyclin-dependent kinase F-1 (479 aa).

One can recognise a Protein kinase domain in the interval 21–418 (YEIFERVGSG…TMEMLNDKYL (398 aa)). Residues 27–35 (VGSGAYADV) and Lys50 each bind ATP. At Tyr32 the chain carries Phosphotyrosine. Asp146 functions as the Proton acceptor in the catalytic mechanism. Phosphoserine occurs at positions 179, 208, and 247. The disordered stretch occupies residues 187 to 221 (KLEDKDGETSEPPEVIPDYENSPRQGSDGQEREAM). Phosphothreonine is present on Thr290. A disordered region spans residues 434-479 (PTMSGPDEDSPRKWNDYREMDSDSDFDGFGPMNVKPTSSGFTIEFP). Residues 442-454 (DSPRKWNDYREMD) are compositionally biased toward basic and acidic residues. A compositionally biased stretch (polar residues) spans 468–479 (KPTSSGFTIEFP).

It belongs to the protein kinase superfamily. CMGC Ser/Thr protein kinase family. CDC2/CDKX subfamily. As to expression, highly expressed in suspension cell culture. Expressed at low levels in all plant organs.

The enzyme catalyses L-seryl-[protein] + ATP = O-phospho-L-seryl-[protein] + ADP + H(+). It catalyses the reaction L-threonyl-[protein] + ATP = O-phospho-L-threonyl-[protein] + ADP + H(+). The catalysed reaction is [DNA-directed RNA polymerase] + ATP = phospho-[DNA-directed RNA polymerase] + ADP + H(+). CDK-activating kinase that modulates CDKD-2 and CDKD-3 activities by phosphorylation of the T-loop. Activates CDKD-2 C-terminal domain (CTD) kinase activity. Activates CDKA-1 probably by phosphorylation. Possesses a CDK kinase activity independently of association with cyclin CYCH1-1. Phosphorylates the CTD of the large subunit of RNA polymerase II. This Arabidopsis thaliana (Mouse-ear cress) protein is Cyclin-dependent kinase F-1 (CDKF-1).